A 120-amino-acid polypeptide reads, in one-letter code: MFLLHEYDIFWTFLIISSVIPILAFLISGVLAPINEGPEKLSSYESGIEPMGDAWVQFRIRYYMFALVFVVFDVETVFLYPWAMSFDVLGVSVFIEAFIFVLIPIVGSVYAWRKGALEWS.

Helical transmembrane passes span 9–29 (IFWT…LISG), 64–84 (MFAL…PWAM), and 88–108 (VLGV…IVGS).

It belongs to the complex I subunit 3 family. In terms of assembly, NDH is composed of at least 16 different subunits, 5 of which are encoded in the nucleus.

It is found in the plastid. The protein resides in the chloroplast thylakoid membrane. It carries out the reaction a plastoquinone + NADH + (n+1) H(+)(in) = a plastoquinol + NAD(+) + n H(+)(out). It catalyses the reaction a plastoquinone + NADPH + (n+1) H(+)(in) = a plastoquinol + NADP(+) + n H(+)(out). NDH shuttles electrons from NAD(P)H:plastoquinone, via FMN and iron-sulfur (Fe-S) centers, to quinones in the photosynthetic chain and possibly in a chloroplast respiratory chain. The immediate electron acceptor for the enzyme in this species is believed to be plastoquinone. Couples the redox reaction to proton translocation, and thus conserves the redox energy in a proton gradient. The protein is NAD(P)H-quinone oxidoreductase subunit 3, chloroplastic of Piper cenocladum (Ant piper).